We begin with the raw amino-acid sequence, 701 residues long: MSCCKGLTPQCVRVRLPRRPALSHPARLYSSSSSSNSHSSPSRPRLLSRPQPHNAILHLPRPNLGSGRYDRIPQARSSHHSSAPMTDLEQRIAAIPIERYRNFCVIAHVDHGKSTLSDRLLELTGTISASDENKQILDKLDVERERGITVKAQTCTMLYRYRGEDYLLHLVDTPGHVDFRAEVTRSYASCGGALLLVDASQGVQAQTVANFYLAFAEGLTLVPVVNKIDLPTADPERALKQLRDTFELDVNEDGTGAVLVSAKAGTNVEKVLPAVIEQIPHPTGDPNAPLRLLLVDSWYDTFRGVVLLVRIFNGTVRPGDNVVSLATGNRYTVGEVGIQYPHPTPQTALRPGQVGYLSFSPGMKRIQDAKIGDTFTFQGSEAVVEPYPGFEEPKPMVFVAAFPTDQSDYQRLADSITQLTLNDRSVTLQKDFSEALGAGWRLGFLGSLHCSVFQDRLRQEHGASIMLTEPAVPTKVQWRDGKSTIITNPTQFPDQSEYHGKIEGFYEPFVAATIAVPEEYLGRIIKLCEDSRGEQESIEFFGAQQVIVKYALPSMALVDDLFGKLKGASRGYATLDYEDAGWRRSELVKLNLLVNKVPVDAICRVVHTSQVERLGRKWVTKFKEHVDRQMFEVVIQAAVGKRIIARETIKPFRKDVTAKLHAADPSRRRKLLEKQKEGRKKLRAIGNVTIEHSSFQKFLER.

The N-terminal 29 residues, 1 to 29, are a transit peptide targeting the mitochondrion; the sequence is MSCCKGLTPQCVRVRLPRRPALSHPARLY. Residues 23–50 show a composition bias toward low complexity; that stretch reads SHPARLYSSSSSSNSHSSPSRPRLLSRP. The tract at residues 23–85 is disordered; it reads SHPARLYSSS…RSSHHSSAPM (63 aa). Residues 98 to 283 enclose the tr-type G domain; sequence ERYRNFCVIA…AVIEQIPHPT (186 aa). Residues 107–114, 172–176, and 226–229 each bind GTP; these read AHVDHGKS, DTPGH, and NKID.

This sequence belongs to the TRAFAC class translation factor GTPase superfamily. Classic translation factor GTPase family. LepA subfamily.

The protein localises to the mitochondrion inner membrane. It catalyses the reaction GTP + H2O = GDP + phosphate + H(+). Its function is as follows. Promotes mitochondrial protein synthesis. May act as a fidelity factor of the translation reaction, by catalyzing a one-codon backward translocation of tRNAs on improperly translocated ribosomes. Binds to mitochondrial ribosomes in a GTP-dependent manner. The protein is Translation factor GUF1, mitochondrial of Pyricularia oryzae (strain 70-15 / ATCC MYA-4617 / FGSC 8958) (Rice blast fungus).